The chain runs to 61 residues: Large ribosomal subunit protein eL29y (61 aa).

Positions 1-61 (MAKSKNHTAH…KSGENAGVEE (61 aa)) are disordered. Residues 15–31 (KAHKNGIKKPRRHRHTP) are compositionally biased toward basic residues.

Belongs to the eukaryotic ribosomal protein eL29 family.

This chain is Large ribosomal subunit protein eL29y (RPL29B), found in Arabidopsis thaliana (Mouse-ear cress).